The chain runs to 284 residues: Tropomyosin (284 aa).

The stretch at 1–280 (MDAIKKKMQA…SDELDQTFAE (280 aa)) forms a coiled coil.

The protein belongs to the tropomyosin family. Homodimer.

Its function is as follows. Tropomyosin, in association with the troponin complex, plays a central role in the calcium dependent regulation of muscle contraction. The chain is Tropomyosin from Sinonovacula constricta (Razor clam).